A 349-amino-acid chain; its full sequence is Probable dual-specificity RNA methyltransferase RlmN (349 aa).

Residue Glu94 is the Proton acceptor of the active site. The region spanning 100-321 is the Radical SAM core domain; it reads DEDRATLCVS…TQHGVFATIR (222 aa). A disulfide bridge links Cys107 with Cys332. Residues Cys114, Cys118, and Cys121 each coordinate [4Fe-4S] cluster. S-adenosyl-L-methionine contacts are provided by residues 159 to 160, Ser191, 213 to 215, and His289; these read GE and SMH. Cys332 functions as the S-methylcysteine intermediate in the catalytic mechanism.

The protein belongs to the radical SAM superfamily. RlmN family. [4Fe-4S] cluster serves as cofactor.

Its subcellular location is the cytoplasm. The catalysed reaction is adenosine(2503) in 23S rRNA + 2 reduced [2Fe-2S]-[ferredoxin] + 2 S-adenosyl-L-methionine = 2-methyladenosine(2503) in 23S rRNA + 5'-deoxyadenosine + L-methionine + 2 oxidized [2Fe-2S]-[ferredoxin] + S-adenosyl-L-homocysteine. It carries out the reaction adenosine(37) in tRNA + 2 reduced [2Fe-2S]-[ferredoxin] + 2 S-adenosyl-L-methionine = 2-methyladenosine(37) in tRNA + 5'-deoxyadenosine + L-methionine + 2 oxidized [2Fe-2S]-[ferredoxin] + S-adenosyl-L-homocysteine. Specifically methylates position 2 of adenine 2503 in 23S rRNA and position 2 of adenine 37 in tRNAs. This chain is Probable dual-specificity RNA methyltransferase RlmN, found in Phocaeicola vulgatus (strain ATCC 8482 / DSM 1447 / JCM 5826 / CCUG 4940 / NBRC 14291 / NCTC 11154) (Bacteroides vulgatus).